The following is a 194-amino-acid chain: CASP-like protein 2D1 (194 aa).

Over residues 1–16 (MRDNNNNNTREEERSS) the composition is skewed to basic and acidic residues. The segment at 1-26 (MRDNNNNNTREEERSSSSKQQQPQAP) is disordered. The Cytoplasmic portion of the chain corresponds to 1 to 30 (MRDNNNNNTREEERSSSSKQQQPQAPMSLK). Residues 31-51 (IIDSCLRLSVVPLSVATIWLT) form a helical membrane-spanning segment. Residues 52-74 (VTNHESNPDYGNLEYNSIMGLKY) are Extracellular-facing. A helical membrane pass occupies residues 75–95 (MVGVSAISAIYALLSTVSSWV). Topologically, residues 96–110 (TCLVSKAWLFFIPDQ) are cytoplasmic. The chain crosses the membrane as a helical span at residues 111–133 (VLAYVMTTSVAGATEIVYLLNKG). At 134–152 (DKIVTWSEMCSSYPHYCSK) the chain is on the extracellular side. A helical membrane pass occupies residues 153–173 (LTIALGLHVFVLFFFLFLSVI). The Cytoplasmic portion of the chain corresponds to 174 to 194 (SAYRAFSPFDPPCDSQTNNDA).

This sequence belongs to the Casparian strip membrane proteins (CASP) family. As to quaternary structure, homodimer and heterodimers.

The protein localises to the cell membrane. In Arabidopsis thaliana (Mouse-ear cress), this protein is CASP-like protein 2D1.